The following is a 174-amino-acid chain: Repair DNA polymerase X (174 aa).

Residues 42–51 (REEKMLNDVD) form an involved in ssDNA binding region. Mg(2+) contacts are provided by aspartate 49 and aspartate 51. A disulfide bridge links cysteine 81 with cysteine 86. Aspartate 100 is a Mg(2+) binding site.

The protein belongs to the DNA polymerase type-X family. The cofactor is Mg(2+).

Its subcellular location is the virion. It carries out the reaction DNA(n) + a 2'-deoxyribonucleoside 5'-triphosphate = DNA(n+1) + diphosphate. In terms of biological role, error-prone polymerase lacking a proofreading 3'-5' exonuclease which catalyzes the gap-filling reaction during the DNA repair process. Specifically binds intermediates in the single-nucleotide base-excision repair process. Also catalyzes DNA polymerization with low nucleotide-insertion fidelity. Probably acts as a strategic DNA mutase, which gives rise to a rapid emergence of variants. Generates mismatched G-G pairs, in that case, the polymerase first binds the deoxynucleotide followed by mismatch formation. Together with the viral DNA ligase, fills the single nucleotide gaps generated by the AP endonuclease. Binds DNA with high affinity via the helix alphaE. This chain is Repair DNA polymerase X, found in Ornithodoros (relapsing fever ticks).